The sequence spans 336 residues: Palmitoyltransferase SWF1 (336 aa).

The Lumenal portion of the chain corresponds to methionine 1–serine 2. Residues tryptophan 3–phenylalanine 23 traverse the membrane as a helical segment. The Cytoplasmic segment spans residues lysine 24–lysine 50. Residues leucine 51–methionine 71 traverse the membrane as a helical segment. At arginine 72–arginine 86 the chain is on the lumenal side. Residues isoleucine 87–serine 107 traverse the membrane as a helical segment. Over arginine 108–phenylalanine 179 the chain is Cytoplasmic. Residues isoleucine 134–isoleucine 184 form the DHHC domain. A helical membrane pass occupies residues tyrosine 180–isoleucine 200. Over serine 201–threonine 216 the chain is Lumenal. A helical membrane pass occupies residues isoleucine 217 to valine 237. Over lysine 238 to isoleucine 336 the chain is Cytoplasmic.

Belongs to the DHHC palmitoyltransferase family. SWF1 subfamily.

It localises to the endoplasmic reticulum membrane. It catalyses the reaction L-cysteinyl-[protein] + hexadecanoyl-CoA = S-hexadecanoyl-L-cysteinyl-[protein] + CoA. Palmitoyltransferase that targets several endosomal SNAREs. Palmitoylates the SNAREs SNC1, SNC2, SYN8 and TLG1, at cysteine residues close to the cytoplasmic end of their transmembrane domain. May have a role in the cellular quality control of transmembrane domain-containing proteins. This chain is Palmitoyltransferase SWF1 (SWF1), found in Saccharomyces cerevisiae (strain ATCC 204508 / S288c) (Baker's yeast).